Here is an 88-residue protein sequence, read N- to C-terminus: UPF0335 protein MexAM1_META1p2947 (88 aa).

This sequence belongs to the UPF0335 family.

The protein is UPF0335 protein MexAM1_META1p2947 of Methylorubrum extorquens (strain ATCC 14718 / DSM 1338 / JCM 2805 / NCIMB 9133 / AM1) (Methylobacterium extorquens).